A 362-amino-acid chain; its full sequence is uncharacterized protein (362 aa).

This sequence belongs to the carbohydrate kinase PfkB family.

This is an uncharacterized protein from Escherichia coli (strain K12).